Reading from the N-terminus, the 118-residue chain is Large ribosomal subunit protein bL20 (118 aa).

This sequence belongs to the bacterial ribosomal protein bL20 family.

Binds directly to 23S ribosomal RNA and is necessary for the in vitro assembly process of the 50S ribosomal subunit. It is not involved in the protein synthesizing functions of that subunit. The chain is Large ribosomal subunit protein bL20 from Synechococcus sp. (strain JA-2-3B'a(2-13)) (Cyanobacteria bacterium Yellowstone B-Prime).